Consider the following 431-residue polypeptide: Adenylosuccinate synthetase (431 aa).

GTP contacts are provided by residues 12 to 18 and 40 to 42; these read GDEGKGK and GHT. Asp-13 (proton acceptor) is an active-site residue. Residues Asp-13 and Gly-40 each coordinate Mg(2+). IMP contacts are provided by residues 13 to 16, 38 to 41, Thr-130, Arg-144, Gln-225, Thr-240, and Arg-304; these read DEGK and NAGH. His-41 serves as the catalytic Proton donor. Substrate is bound at residue 300–306; that stretch reads ATTGRPR. GTP is bound by residues Arg-306, 332–334, and 414–416; these read KLD and SVG.

It belongs to the adenylosuccinate synthetase family. In terms of assembly, homodimer. Mg(2+) serves as cofactor.

The protein localises to the cytoplasm. The enzyme catalyses IMP + L-aspartate + GTP = N(6)-(1,2-dicarboxyethyl)-AMP + GDP + phosphate + 2 H(+). The protein operates within purine metabolism; AMP biosynthesis via de novo pathway; AMP from IMP: step 1/2. Plays an important role in the de novo pathway of purine nucleotide biosynthesis. Catalyzes the first committed step in the biosynthesis of AMP from IMP. The chain is Adenylosuccinate synthetase from Geotalea daltonii (strain DSM 22248 / JCM 15807 / FRC-32) (Geobacter daltonii).